Consider the following 563-residue polypeptide: Arginine--tRNA ligase (563 aa).

The 'HIGH' region signature appears at 121 to 131 (PNIAKPFSIGH).

This sequence belongs to the class-I aminoacyl-tRNA synthetase family. In terms of assembly, monomer.

Its subcellular location is the cytoplasm. The catalysed reaction is tRNA(Arg) + L-arginine + ATP = L-arginyl-tRNA(Arg) + AMP + diphosphate. This Streptococcus pyogenes serotype M2 (strain MGAS10270) protein is Arginine--tRNA ligase.